The following is a 117-amino-acid chain: Regulator of ribonuclease activity B (117 aa).

Belongs to the RraB family. As to quaternary structure, interacts with the C-terminal region of Rne.

The protein localises to the cytoplasm. Functionally, globally modulates RNA abundance by binding to RNase E (Rne) and regulating its endonucleolytic activity. Can modulate Rne action in a substrate-dependent manner by altering the composition of the degradosome. This chain is Regulator of ribonuclease activity B, found in Pseudoalteromonas atlantica (strain T6c / ATCC BAA-1087).